A 63-amino-acid polypeptide reads, in one-letter code: MKLSLLSVELALLIATTLPLCWAAALPVGLGVGLDYCNSSCTRAFDCLGQCGRCDFHKLQCVH.

The N-terminal stretch at 1 to 23 (MKLSLLSVELALLIATTLPLCWA) is a signal peptide. Residues 24–35 (AALPVGLGVGLD) constitute a propeptide that is removed on maturation. Cystine bridges form between Cys-37-Cys-51, Cys-41-Cys-54, and Cys-47-Cys-61.

Its function is as follows. This necrosis-inducing peptide induces a hypersensitive response on Cf-9 tomato genotypes. Race-specific elicitors are compounds which only induce defense responses in genotypes of host plants which are resistant to the pathogenic race that produces the elicitor, but not in susceptible genotypes. The chain is Race-specific elicitor A9 (AVR9) from Passalora fulva (Tomato leaf mold).